We begin with the raw amino-acid sequence, 338 residues long: STEAP1 protein (338 aa).

Transmembrane regions (helical) follow at residues 70 to 90 and 118 to 138; these read WHLPIKIAAIVSSLTFLYTLL and PMVSITLLALVYLPGVIAAIV. One can recognise a Ferric oxidoreductase domain in the interval 117-264; that stretch reads LPMVSITLLA…TLGIVSLLLG (148 aa). FAD is bound by residues glutamine 139 and arginine 160. Transmembrane regions (helical) follow at residues 163–183, 217–237, 252–272, and 290–310; these read FGLLSFFFAVLHAVYSLSYPM, IYVSLGIVTLAILALLAVTSI, IQSTLGIVSLLLGTIHALIFA, and FMIAVFLPTVVLICKVILLLP. Histidine 174 serves as a coordination point for heme b. Positions 236 and 253 each coordinate FAD. Histidine 267 serves as a coordination point for heme b.

Belongs to the STEAP family. In terms of assembly, homotrimer. FAD serves as cofactor. Heme b is required as a cofactor.

The protein localises to the endosome membrane. Its subcellular location is the cell membrane. Functionally, does not function as a metalloreductase due to the absence of binding sites for the electron-donating substrate NADPH. The protein is STEAP1 protein (STEAP1) of Sus scrofa (Pig).